A 438-amino-acid chain; its full sequence is Flagellum-specific ATP synthase (438 aa).

The disordered stretch occupies residues 119-139 (GLSPVSTEQSPPNPMKRPPIR). ATP is bound at residue 165–172 (AGSGVGKS).

This sequence belongs to the ATPase alpha/beta chains family.

It is found in the cytoplasm. It carries out the reaction ATP + H2O + 4 H(+)(in) = ADP + phosphate + 5 H(+)(out). Its function is as follows. Probable catalytic subunit of a protein translocase for flagellum-specific export, or a proton translocase involved in local circuits at the flagellum. The sequence is that of Flagellum-specific ATP synthase (fliI) from Bacillus subtilis (strain 168).